A 78-amino-acid polypeptide reads, in one-letter code: Large ribosomal subunit protein bL31 (78 aa).

Residues Cys-16, Cys-18, Cys-38, and Cys-41 each coordinate Zn(2+).

This sequence belongs to the bacterial ribosomal protein bL31 family. Type A subfamily. As to quaternary structure, part of the 50S ribosomal subunit. Requires Zn(2+) as cofactor.

Its function is as follows. Binds the 23S rRNA. The chain is Large ribosomal subunit protein bL31 from Parafrankia sp. (strain EAN1pec).